The primary structure comprises 209 residues: 3-demethoxyubiquinol 3-hydroxylase (209 aa).

Positions 58, 88, 91, 140, 172, and 175 each coordinate Fe cation.

This sequence belongs to the COQ7 family. Requires Fe cation as cofactor.

It is found in the cell membrane. The enzyme catalyses a 5-methoxy-2-methyl-3-(all-trans-polyprenyl)benzene-1,4-diol + AH2 + O2 = a 3-demethylubiquinol + A + H2O. It participates in cofactor biosynthesis; ubiquinone biosynthesis. Its function is as follows. Catalyzes the hydroxylation of 2-nonaprenyl-3-methyl-6-methoxy-1,4-benzoquinol during ubiquinone biosynthesis. The chain is 3-demethoxyubiquinol 3-hydroxylase from Polaromonas sp. (strain JS666 / ATCC BAA-500).